Consider the following 269-residue polypeptide: Small ribosomal subunit protein uS3m (269 aa).

It belongs to the universal ribosomal protein uS3 family.

It localises to the mitochondrion. In terms of biological role, essential for mitochondrial protein synthesis and required for the maturation of small ribosomal subunits. The chain is Small ribosomal subunit protein uS3m (VAR1) from Monosporozyma servazzii (Yeast).